We begin with the raw amino-acid sequence, 349 residues long: Magnesium-protoporphyrin IX monomethyl ester [oxidative] cyclase (349 aa).

Low complexity predominate over residues 1 to 10 (MTATTATAPT). The tract at residues 1–23 (MTATTATAPTMRGGGRNELPPHL) is disordered.

The protein belongs to the AcsF family. The cofactor is Fe cation.

The catalysed reaction is Mg-protoporphyrin IX 13-monomethyl ester + 3 NADPH + 3 O2 + 2 H(+) = 3,8-divinyl protochlorophyllide a + 3 NADP(+) + 5 H2O. It functions in the pathway porphyrin-containing compound metabolism; chlorophyll biosynthesis (light-independent). Functionally, catalyzes the formation of the isocyclic ring in chlorophyll biosynthesis. Mediates the cyclase reaction, which results in the formation of divinylprotochlorophyllide (Pchlide) characteristic of all chlorophylls from magnesium-protoporphyrin IX 13-monomethyl ester (MgPMME). The sequence is that of Magnesium-protoporphyrin IX monomethyl ester [oxidative] cyclase from Prochlorococcus marinus (strain MIT 9313).